Reading from the N-terminus, the 61-residue chain is Small ribosomal subunit protein uS14B (61 aa).

Residues Cys24, Cys27, Cys40, and Cys43 each contribute to the Zn(2+) site.

Belongs to the universal ribosomal protein uS14 family. Zinc-binding uS14 subfamily. Part of the 30S ribosomal subunit. Contacts proteins S3 and S10. Zn(2+) is required as a cofactor.

Functionally, binds 16S rRNA, required for the assembly of 30S particles and may also be responsible for determining the conformation of the 16S rRNA at the A site. This Rhodococcus jostii (strain RHA1) protein is Small ribosomal subunit protein uS14B.